The chain runs to 96 residues: MRSQKKGPFIDTHVLAKIEDMNNRNEKKVVRTWSRRSTIIPEMVGHTLAVHNGKKFIPVYVTENMVGHKLGEFSFTRQFKGHSVKAATETAAKPAR.

Belongs to the universal ribosomal protein uS19 family.

Protein S19 forms a complex with S13 that binds strongly to the 16S ribosomal RNA. In Koribacter versatilis (strain Ellin345), this protein is Small ribosomal subunit protein uS19.